The sequence spans 90 residues: MKPMYRSRSWRRKYVRTPGGRTVIHFERRKPKVAHCAMCGRPLNGVPRGRPSELRKLPKTKKRPERPYPNLCPSCMRKVMKAQVRASITA.

4 residues coordinate Zn(2+): Cys36, Cys39, Cys72, and Cys75. The interval 41–72 (RPLNGVPRGRPSELRKLPKTKKRPERPYPNLC) is disordered.

The protein belongs to the eukaryotic ribosomal protein eL34 family. As to quaternary structure, part of the 50S ribosomal subunit. Zn(2+) serves as cofactor.

This is Large ribosomal subunit protein eL34 from Thermococcus kodakarensis (strain ATCC BAA-918 / JCM 12380 / KOD1) (Pyrococcus kodakaraensis (strain KOD1)).